Consider the following 178-residue polypeptide: Translation initiation factor IF-3 (178 aa).

Positions 1–20 are disordered; the sequence is MRRPFRATPVQKDGPRSNRD.

Belongs to the IF-3 family. Monomer.

Its subcellular location is the cytoplasm. Functionally, IF-3 binds to the 30S ribosomal subunit and shifts the equilibrium between 70S ribosomes and their 50S and 30S subunits in favor of the free subunits, thus enhancing the availability of 30S subunits on which protein synthesis initiation begins. The protein is Translation initiation factor IF-3 of Brucella abortus biovar 1 (strain 9-941).